Reading from the N-terminus, the 33-residue chain is Alpha-amanitin proprotein (33 aa).

Residues 1–10 constitute a propeptide that is removed on maturation; sequence MSDINATRLP. Isoleucine 11 carries the (3R,4R)-4,5-dihydroxyisoleucine; in form alpha-amanitin modification. Isoleucine 11 is modified ((3R,4S)-4-hydroxyisoleucine; in form gamma-amanitin). The segment at residues 11–18 is a cross-link (cyclopeptide (Ile-Pro)); the sequence is IWGIGCNP. A cross-link (2'-cysteinyl-6'-hydroxytryptophan sulfoxide (Trp-Cys)) is located at residues 12 to 16; sequence WGIGC. Position 18 is a 4-hydroxyproline (proline 18). Positions 19-33 are excised as a propeptide; that stretch reads SVGDEVTALLASGEA.

Belongs to the MSDIN fungal toxin family. Processed by the macrocyclase-peptidase enzyme POPB to yield a toxic cyclic decapeptide. POPB first removes 10 residues from the N-terminus. Conformational trapping of the remaining peptide forces the enzyme to release this intermediate rather than proceed to macrocyclization. The enzyme rebinds the remaining peptide in a different conformation and catalyzes macrocyclization of the N-terminal 8 residues.

Major toxin belonging to the bicyclic octapeptides amatoxins that acts by binding non-competitively to RNA polymerase II and greatly slowing the elongation of transcripts from target promoters. This Amanita rimosa protein is Alpha-amanitin proprotein.